Consider the following 208-residue polypeptide: MKSDLWYFLLFCFQVEALTGEINDSTKSEMFTFHDGGVQILCKFNAIVSQYKMELLKGTEVLCDLTTTKENGNTVSKNPKFCQSQSSSDGVSFFLYNLDSSHASYYACQLSIFDPPPFQRKNISREYLNVYESQTCCQLKFWLPIGCAAFVVVYIFGCIFLCWLTKKKYRSSVHDPNSEYMFMAAVNTAKKPGLTGVTHNLELCGTQA.

Residues 1–19 (MKSDLWYFLLFCFQVEALT) form the signal peptide. Over 20–140 (GEINDSTKSE…YESQTCCQLK (121 aa)) the chain is Extracellular. The N-linked (GlcNAc...) asparagine glycan is linked to Asn-23. In terms of domain architecture, Ig-like V-type spans 30-132 (MFTFHDGGVQ…ISREYLNVYE (103 aa)). 2 disulfide bridges follow: Cys-42/Cys-108 and Cys-63/Cys-82. Residue Asn-122 is glycosylated (N-linked (GlcNAc...) asparagine). The chain crosses the membrane as a helical span at residues 141 to 161 (FWLPIGCAAFVVVYIFGCIFL). The Cytoplasmic segment spans residues 162 to 208 (CWLTKKKYRSSVHDPNSEYMFMAAVNTAKKPGLTGVTHNLELCGTQA).

As to quaternary structure, homodimer; disulfide-linked. Interacts with ICOSLG. Interacts with PIK3R1. Interacts with TBK1; this interaction is critical for the maturation of T follicular regulatory cells. Post-translationally, N-glycosylated.

It is found in the cell membrane. In terms of biological role, stimulatory receptor expressed in activated or antigen-experienced T-cells that plays an important role in the immune response. Upon binding to its ligand ICOSL expressed on antigen presenting cells (APCs), delivers costimulatory signals that enhances all basic T-cell responses to a foreign antigen, namely proliferation, secretion of lymphokines including IL10, up-regulation of molecules that mediate cell-cell interaction, and effective help for antibody secretion by B-cells. Also acts as a costimulatory receptor critical for the differentiation of T follicular regulatory cells upon immune challenges such as viral infection. Mechanistically, potentiates TCR-induced calcium flux by augmenting PLCG1 activation and actin remodeling. In addition, activates PI3K signaling pathways independently of calcium flux. Essential both for efficient interaction between T and B-cells and for normal antibody responses to T-cell dependent antigens. Prevents the apoptosis of pre-activated T-cells. Plays a critical role in CD40-mediated class switching of immunoglobin isotypes. The sequence is that of Inducible T-cell costimulator (ICOS) from Canis lupus familiaris (Dog).